We begin with the raw amino-acid sequence, 96 residues long: Large ribosomal subunit protein uL23 (96 aa).

It belongs to the universal ribosomal protein uL23 family. In terms of assembly, part of the 50S ribosomal subunit. Contacts protein L29, and trigger factor when it is bound to the ribosome.

Its function is as follows. One of the early assembly proteins it binds 23S rRNA. One of the proteins that surrounds the polypeptide exit tunnel on the outside of the ribosome. Forms the main docking site for trigger factor binding to the ribosome. In Nitratidesulfovibrio vulgaris (strain ATCC 29579 / DSM 644 / CCUG 34227 / NCIMB 8303 / VKM B-1760 / Hildenborough) (Desulfovibrio vulgaris), this protein is Large ribosomal subunit protein uL23.